The sequence spans 264 residues: Thymidylate synthase (264 aa).

Arginine 21 is a binding site for dUMP. Histidine 51 provides a ligand contact to (6R)-5,10-methylene-5,6,7,8-tetrahydrofolate. A dUMP-binding site is contributed by 126–127 (RR). Residue cysteine 146 is the Nucleophile of the active site. DUMP is bound by residues 166-169 (RSCD), asparagine 177, and 207-209 (HLY). Aspartate 169 serves as a coordination point for (6R)-5,10-methylene-5,6,7,8-tetrahydrofolate. (6R)-5,10-methylene-5,6,7,8-tetrahydrofolate is bound at residue alanine 263.

It belongs to the thymidylate synthase family. Bacterial-type ThyA subfamily. In terms of assembly, homodimer.

Its subcellular location is the cytoplasm. It carries out the reaction dUMP + (6R)-5,10-methylene-5,6,7,8-tetrahydrofolate = 7,8-dihydrofolate + dTMP. It functions in the pathway pyrimidine metabolism; dTTP biosynthesis. Functionally, catalyzes the reductive methylation of 2'-deoxyuridine-5'-monophosphate (dUMP) to 2'-deoxythymidine-5'-monophosphate (dTMP) while utilizing 5,10-methylenetetrahydrofolate (mTHF) as the methyl donor and reductant in the reaction, yielding dihydrofolate (DHF) as a by-product. This enzymatic reaction provides an intracellular de novo source of dTMP, an essential precursor for DNA biosynthesis. The sequence is that of Thymidylate synthase from Shewanella baltica (strain OS185).